We begin with the raw amino-acid sequence, 233 residues long: Octanoyltransferase (233 aa).

Residues 38-218 (AGGPDTLLLL…LVCDALDGVL (181 aa)) form the BPL/LPL catalytic domain. A compositionally biased stretch (basic and acidic residues) spans 57 to 66 (RRTEPHERPL). Residues 57 to 77 (RRTEPHERPLDGTPVVDTDRG) form a disordered region. Substrate contacts are provided by residues 76 to 83 (RGGKITWH), 148 to 150 (AIG), and 161 to 163 (GFA). Cys179 functions as the Acyl-thioester intermediate in the catalytic mechanism.

The protein belongs to the LipB family.

Its subcellular location is the cytoplasm. It catalyses the reaction octanoyl-[ACP] + L-lysyl-[protein] = N(6)-octanoyl-L-lysyl-[protein] + holo-[ACP] + H(+). The protein operates within protein modification; protein lipoylation via endogenous pathway; protein N(6)-(lipoyl)lysine from octanoyl-[acyl-carrier-protein]: step 1/2. Functionally, catalyzes the transfer of endogenously produced octanoic acid from octanoyl-acyl-carrier-protein onto the lipoyl domains of lipoate-dependent enzymes. Lipoyl-ACP can also act as a substrate although octanoyl-ACP is likely to be the physiological substrate. In Mycobacterium avium (strain 104), this protein is Octanoyltransferase.